The chain runs to 81 residues: Alpha-toxin Ac1 (81 aa).

The N-terminal stretch at 1–17 is a signal peptide; that stretch reads YIVMISLALVVMIGVES. The 62-residue stretch at 19 to 80 folds into the LCN-type CS-alpha/beta domain; the sequence is RDGYIVYPNN…PIKDPSQKCT (62 aa). Intrachain disulfides connect C29–C79, C33–C51, C37–C61, and C41–C63.

This sequence belongs to the long (4 C-C) scorpion toxin superfamily. Sodium channel inhibitor family. Alpha subfamily. In terms of tissue distribution, expressed by the venom gland.

The protein localises to the secreted. Alpha toxins bind voltage-independently at site-3 of sodium channels (Nav) and inhibit the inactivation of the activated channels, thereby blocking neuronal transmission. In Androctonus crassicauda (Arabian fat-tailed scorpion), this protein is Alpha-toxin Ac1.